Consider the following 134-residue polypeptide: Large ribosomal subunit protein bL20 (134 aa).

Belongs to the bacterial ribosomal protein bL20 family.

In terms of biological role, binds directly to 23S ribosomal RNA and is necessary for the in vitro assembly process of the 50S ribosomal subunit. It is not involved in the protein synthesizing functions of that subunit. This chain is Large ribosomal subunit protein bL20, found in Rhizobium etli (strain CIAT 652).